The following is a 300-amino-acid chain: Phosphatidylserine decarboxylase proenzyme (300 aa).

Catalysis depends on charge relay system; for autoendoproteolytic cleavage activity residues Asp-117, His-173, and Ser-260. Ser-260 acts as the Schiff-base intermediate with substrate; via pyruvic acid; for decarboxylase activity in catalysis. The residue at position 260 (Ser-260) is a Pyruvic acid (Ser); by autocatalysis.

The protein belongs to the phosphatidylserine decarboxylase family. PSD-B subfamily. Prokaryotic type II sub-subfamily. Heterodimer of a large membrane-associated beta subunit and a small pyruvoyl-containing alpha subunit. Pyruvate is required as a cofactor. In terms of processing, is synthesized initially as an inactive proenzyme. Formation of the active enzyme involves a self-maturation process in which the active site pyruvoyl group is generated from an internal serine residue via an autocatalytic post-translational modification. Two non-identical subunits are generated from the proenzyme in this reaction, and the pyruvate is formed at the N-terminus of the alpha chain, which is derived from the carboxyl end of the proenzyme. The autoendoproteolytic cleavage occurs by a canonical serine protease mechanism, in which the side chain hydroxyl group of the serine supplies its oxygen atom to form the C-terminus of the beta chain, while the remainder of the serine residue undergoes an oxidative deamination to produce ammonia and the pyruvoyl prosthetic group on the alpha chain. During this reaction, the Ser that is part of the protease active site of the proenzyme becomes the pyruvoyl prosthetic group, which constitutes an essential element of the active site of the mature decarboxylase.

It localises to the cell membrane. It carries out the reaction a 1,2-diacyl-sn-glycero-3-phospho-L-serine + H(+) = a 1,2-diacyl-sn-glycero-3-phosphoethanolamine + CO2. Its pathway is phospholipid metabolism; phosphatidylethanolamine biosynthesis; phosphatidylethanolamine from CDP-diacylglycerol: step 2/2. Its function is as follows. Catalyzes the formation of phosphatidylethanolamine (PtdEtn) from phosphatidylserine (PtdSer). This is Phosphatidylserine decarboxylase proenzyme from Fusobacterium nucleatum subsp. nucleatum (strain ATCC 25586 / DSM 15643 / BCRC 10681 / CIP 101130 / JCM 8532 / KCTC 2640 / LMG 13131 / VPI 4355).